The primary structure comprises 193 residues: LOB domain-containing protein 12 (193 aa).

The LOB domain maps to 7–108 (SPCASCKLLR…MQLAVAQAEI (102 aa)).

This sequence belongs to the LOB domain-containing protein family. Expressed predominantly in roots, and at low levels in shoots, floral stems and open flowers.

This Arabidopsis thaliana (Mouse-ear cress) protein is LOB domain-containing protein 12 (LBD12).